The chain runs to 94 residues: Integration host factor subunit beta (94 aa).

It belongs to the bacterial histone-like protein family. As to quaternary structure, heterodimer of an alpha and a beta chain.

This protein is one of the two subunits of integration host factor, a specific DNA-binding protein that functions in genetic recombination as well as in transcriptional and translational control. The chain is Integration host factor subunit beta from Xanthobacter autotrophicus (strain ATCC BAA-1158 / Py2).